The following is a 901-amino-acid chain: Protein translocase subunit SecA (901 aa).

Residues Gln85, 103–107 (GEGKT), and Asp492 each bind ATP. The segment at 828 to 901 (GLVTDDGGNP…PKNRRNKKRR (74 aa)) is disordered. A compositionally biased stretch (basic and acidic residues) spans 871-881 (DGQKPRGEGNR). Positions 882–901 (AARRSAASKKPKNRRNKKRR) are enriched in basic residues.

Belongs to the SecA family. As to quaternary structure, monomer and homodimer. Part of the essential Sec protein translocation apparatus which comprises SecA, SecYEG and auxiliary proteins SecDF. Other proteins may also be involved.

The protein resides in the cell membrane. It localises to the cytoplasm. It catalyses the reaction ATP + H2O + cellular proteinSide 1 = ADP + phosphate + cellular proteinSide 2.. Functionally, part of the Sec protein translocase complex. Interacts with the SecYEG preprotein conducting channel. Has a central role in coupling the hydrolysis of ATP to the transfer of proteins into and across the cell membrane, serving as an ATP-driven molecular motor driving the stepwise translocation of polypeptide chains across the membrane. The protein is Protein translocase subunit SecA of Cutibacterium acnes (strain DSM 16379 / KPA171202) (Propionibacterium acnes).